The following is a 293-amino-acid chain: Small ribosomal subunit protein uS2 (293 aa).

The interval Ile219–Ala293 is disordered.

The protein belongs to the universal ribosomal protein uS2 family. As to quaternary structure, component of the small ribosomal subunit. Mature ribosomes consist of a small (40S) and a large (60S) subunit. The 40S subunit contains about 33 different proteins and 1 molecule of RNA (18S). The 60S subunit contains about 49 different proteins and 3 molecules of RNA (28S, 5.8S and 5S). Interacts with ribosomal protein S21.

It is found in the cytoplasm. Functionally, required for the assembly and/or stability of the 40S ribosomal subunit. Required for the processing of the 20S rRNA-precursor to mature 18S rRNA in a late step of the maturation of 40S ribosomal subunits. The sequence is that of Small ribosomal subunit protein uS2 from Hydra viridissima (Green hydra).